The sequence spans 438 residues: Lipid-A-disaccharide synthase (438 aa).

This sequence belongs to the LpxB family.

The catalysed reaction is a lipid X + a UDP-2-N,3-O-bis[(3R)-3-hydroxyacyl]-alpha-D-glucosamine = a lipid A disaccharide + UDP + H(+). It functions in the pathway bacterial outer membrane biogenesis; LPS lipid A biosynthesis. Condensation of UDP-2,3-diacylglucosamine and 2,3-diacylglucosamine-1-phosphate to form lipid A disaccharide, a precursor of lipid A, a phosphorylated glycolipid that anchors the lipopolysaccharide to the outer membrane of the cell. This Xanthomonas campestris pv. campestris (strain 8004) protein is Lipid-A-disaccharide synthase.